Here is a 258-residue protein sequence, read N- to C-terminus: NAD kinase (258 aa).

D44 serves as the catalytic Proton acceptor. NAD(+)-binding positions include 44 to 45 (DG), 116 to 117 (NE), D146, A154, and 157 to 162 (TAYNLS).

Belongs to the NAD kinase family. A divalent metal cation is required as a cofactor.

Its subcellular location is the cytoplasm. The catalysed reaction is NAD(+) + ATP = ADP + NADP(+) + H(+). Its function is as follows. Involved in the regulation of the intracellular balance of NAD and NADP, and is a key enzyme in the biosynthesis of NADP. Catalyzes specifically the phosphorylation on 2'-hydroxyl of the adenosine moiety of NAD to yield NADP. The polypeptide is NAD kinase (Zymomonas mobilis subsp. mobilis (strain ATCC 31821 / ZM4 / CP4)).